Consider the following 346-residue polypeptide: Holliday junction branch migration complex subunit RuvB (346 aa).

Positions 1 to 11 (MTEQRTIASSA) are enriched in polar residues. A disordered region spans residues 1 to 20 (MTEQRTIASSATREDEAADA). The large ATPase domain (RuvB-L) stretch occupies residues 1 to 183 (MTEQRTIASS…FGIVQRLEFY (183 aa)). Residues I22, R23, G64, K67, T68, T69, 130-132 (EDF), R173, Y183, and R220 contribute to the ATP site. Residue T68 coordinates Mg(2+). The small ATPAse domain (RuvB-S) stretch occupies residues 184 to 254 (SPQELTRIVI…VAQAAMQMLK (71 aa)). Residues 257 to 346 (PEGFDELDRR…PAIGEPGDLF (90 aa)) form a head domain (RuvB-H) region. DNA contacts are provided by R293, R312, and R317.

The protein belongs to the RuvB family. In terms of assembly, homohexamer. Forms an RuvA(8)-RuvB(12)-Holliday junction (HJ) complex. HJ DNA is sandwiched between 2 RuvA tetramers; dsDNA enters through RuvA and exits via RuvB. An RuvB hexamer assembles on each DNA strand where it exits the tetramer. Each RuvB hexamer is contacted by two RuvA subunits (via domain III) on 2 adjacent RuvB subunits; this complex drives branch migration. In the full resolvosome a probable DNA-RuvA(4)-RuvB(12)-RuvC(2) complex forms which resolves the HJ.

It is found in the cytoplasm. It carries out the reaction ATP + H2O = ADP + phosphate + H(+). Functionally, the RuvA-RuvB-RuvC complex processes Holliday junction (HJ) DNA during genetic recombination and DNA repair, while the RuvA-RuvB complex plays an important role in the rescue of blocked DNA replication forks via replication fork reversal (RFR). RuvA specifically binds to HJ cruciform DNA, conferring on it an open structure. The RuvB hexamer acts as an ATP-dependent pump, pulling dsDNA into and through the RuvAB complex. RuvB forms 2 homohexamers on either side of HJ DNA bound by 1 or 2 RuvA tetramers; 4 subunits per hexamer contact DNA at a time. Coordinated motions by a converter formed by DNA-disengaged RuvB subunits stimulates ATP hydrolysis and nucleotide exchange. Immobilization of the converter enables RuvB to convert the ATP-contained energy into a lever motion, pulling 2 nucleotides of DNA out of the RuvA tetramer per ATP hydrolyzed, thus driving DNA branch migration. The RuvB motors rotate together with the DNA substrate, which together with the progressing nucleotide cycle form the mechanistic basis for DNA recombination by continuous HJ branch migration. Branch migration allows RuvC to scan DNA until it finds its consensus sequence, where it cleaves and resolves cruciform DNA. The sequence is that of Holliday junction branch migration complex subunit RuvB from Xanthomonas campestris pv. campestris (strain 8004).